The following is a 558-amino-acid chain: Cyclomaltodextrinase (558 aa).

Ca(2+) contacts are provided by asparagine 143, glycine 168, and aspartate 170. Substrate is bound by residues histidine 243 and arginine 323. Catalysis depends on aspartate 325, which acts as the Nucleophile. Glutamate 354 acts as the Proton donor in catalysis. Residues 420–421 (HD), aspartate 465, and arginine 469 contribute to the substrate site.

It belongs to the glycosyl hydrolase 13 family. As to quaternary structure, monomer. Depending on the pH of the solution, exists as a monomer, a homodimer or as an assembly of six homodimers forming a dodecamer, which is catalytically the most efficient form of the enzyme. Ca(2+) serves as cofactor.

It carries out the reaction cyclomaltodextrin + H2O = linear maltodextrin. The catalysed reaction is Hydrolysis of pullulan to panose (6-alpha-D-glucosylmaltose).. With respect to regulation, hydrolysis of beta-cyclodextrin is inhibited by Cu(2+), Zn(2+) and Ag(+), and activated by Ca(2+), EGTA and EDTA. Activity is increased over twofold in the presence of 5 mM EDTA. Competitively inhibited by acarbose and methyl 6-amino-6-deoxy-alpha-D-glucopyranoside by reducing the rate of the ring opening step of the reaction. Functionally, hydrolyzes alpha-, beta- and gamma-cyclodextrins and the resulting linear maltodextrins, with the highest activity with beta-cyclodextrin (cyclomaltoheptaose). Soluble starch is hydrolyzed slowly, but it is nevertheless preferred over pullulan as a substrate. Is able to hydrolyze amylose and amylopectin, with a very strong preference for amylose, with maltose and glucose as the main products. Maltose and glucose are the main hydrolysis products of cyclomaltodextrins, maltodextrins and starch, whereas panose is the main hydrolysis product of pullulan. Acarbose is partially hydrolyzed to glucose and pseudotrisaccharide. No activity with maltose as substrate. Has transglycosylating activity with high concentrations of maltotriose, maltotetraose and starch. The polypeptide is Cyclomaltodextrinase (Bacillus sp).